The chain runs to 198 residues: Adenylyl-sulfate kinase (198 aa).

Position 31–38 (31–38 (GLSGAGKS)) interacts with ATP. The active-site Phosphoserine intermediate is Ser-105.

It belongs to the APS kinase family.

It catalyses the reaction adenosine 5'-phosphosulfate + ATP = 3'-phosphoadenylyl sulfate + ADP + H(+). Its pathway is sulfur metabolism; hydrogen sulfide biosynthesis; sulfite from sulfate: step 2/3. Catalyzes the synthesis of activated sulfate. This Shewanella amazonensis (strain ATCC BAA-1098 / SB2B) protein is Adenylyl-sulfate kinase.